The chain runs to 318 residues: BRISC and BRCA1-A complex member 1 (318 aa).

A disordered region spans residues 1-67; that stretch reads MDTSEPLEEG…TTAVPTNCTP (67 aa). A compositionally biased stretch (basic and acidic residues) spans 9 to 18; that stretch reads EGDRTHEQRP. A VWFA-like region spans residues 86 to 287; the sequence is VIICLDLSEE…LELHNCMARL (202 aa).

The protein belongs to the BABAM1 family. Component of the ARISC complex, at least composed of uimc1/rap80, abraxas1, brcc3/brcc36, BABAM2 and babam1/nba1. Component of the BRCA1-A complex, at least composed of brca1, bard1, uimc1/rap80, abraxas1, brcc3/brcc36, BABAM2 and babam1/nba1. In the BRCA1-A complex, interacts directly with abraxas1 and BABAM2. Component of the BRISC complex, at least composed of abraxas2, brcc3/brcc36, babam2 and babam1/nba1.

Its subcellular location is the cytoplasm. The protein localises to the nucleus. In terms of biological role, component of the BRCA1-A complex, a complex that specifically recognizes 'Lys-63'-linked ubiquitinated histones H2A and H2AX at DNA lesions sites, leading to target the BRCA1-BARD1 heterodimer to sites of DNA damage at double-strand breaks (DSBs). The BRCA1-A complex also possesses deubiquitinase activity that specifically removes 'Lys-63'-linked ubiquitin on histones H2A and H2AX. In the BRCA1-A complex, it is required for the complex integrity and its localization at DSBs. Component of the BRISC complex, a multiprotein complex that specifically cleaves 'Lys-63'-linked ubiquitin in various substrates. In these 2 complexes, it is probably required to maintain the stability of BABAM2 and help the 'Lys-63'-linked deubiquitinase activity mediated by brcc3/brcc36 component. The BRISC complex is required for normal mitotic spindle assembly and microtubule attachment to kinetochores via its role in deubiquitinating numa1. Plays a role in interferon signaling via its role in the deubiquitination of the interferon receptor ifnar1; deubiquitination increases ifnar1 activity by enhancing its stability and cell surface expression. Down-regulates the response to bacterial lipopolysaccharide (LPS) via its role in ifnar1 deubiquitination. In Xenopus tropicalis (Western clawed frog), this protein is BRISC and BRCA1-A complex member 1 (babam1).